The primary structure comprises 309 residues: 4-hydroxy-3-methylbut-2-enyl diphosphate reductase (309 aa).

Cysteine 12 provides a ligand contact to [4Fe-4S] cluster. 2 residues coordinate (2E)-4-hydroxy-3-methylbut-2-enyl diphosphate: histidine 41 and histidine 74. 2 residues coordinate dimethylallyl diphosphate: histidine 41 and histidine 74. Positions 41 and 74 each coordinate isopentenyl diphosphate. [4Fe-4S] cluster is bound at residue cysteine 96. Histidine 124 is a binding site for (2E)-4-hydroxy-3-methylbut-2-enyl diphosphate. Residue histidine 124 participates in dimethylallyl diphosphate binding. Histidine 124 is a binding site for isopentenyl diphosphate. The Proton donor role is filled by glutamate 126. Residue threonine 167 coordinates (2E)-4-hydroxy-3-methylbut-2-enyl diphosphate. Cysteine 197 contacts [4Fe-4S] cluster. (2E)-4-hydroxy-3-methylbut-2-enyl diphosphate-binding residues include serine 225, serine 226, asparagine 227, and serine 269. Residues serine 225, serine 226, asparagine 227, and serine 269 each coordinate dimethylallyl diphosphate. Isopentenyl diphosphate is bound by residues serine 225, serine 226, asparagine 227, and serine 269.

This sequence belongs to the IspH family. Requires [4Fe-4S] cluster as cofactor.

The catalysed reaction is isopentenyl diphosphate + 2 oxidized [2Fe-2S]-[ferredoxin] + H2O = (2E)-4-hydroxy-3-methylbut-2-enyl diphosphate + 2 reduced [2Fe-2S]-[ferredoxin] + 2 H(+). The enzyme catalyses dimethylallyl diphosphate + 2 oxidized [2Fe-2S]-[ferredoxin] + H2O = (2E)-4-hydroxy-3-methylbut-2-enyl diphosphate + 2 reduced [2Fe-2S]-[ferredoxin] + 2 H(+). Its pathway is isoprenoid biosynthesis; dimethylallyl diphosphate biosynthesis; dimethylallyl diphosphate from (2E)-4-hydroxy-3-methylbutenyl diphosphate: step 1/1. It participates in isoprenoid biosynthesis; isopentenyl diphosphate biosynthesis via DXP pathway; isopentenyl diphosphate from 1-deoxy-D-xylulose 5-phosphate: step 6/6. In terms of biological role, catalyzes the conversion of 1-hydroxy-2-methyl-2-(E)-butenyl 4-diphosphate (HMBPP) into a mixture of isopentenyl diphosphate (IPP) and dimethylallyl diphosphate (DMAPP). Acts in the terminal step of the DOXP/MEP pathway for isoprenoid precursor biosynthesis. This is 4-hydroxy-3-methylbut-2-enyl diphosphate reductase from Shewanella halifaxensis (strain HAW-EB4).